Reading from the N-terminus, the 723-residue chain is Threonine--tRNA ligase, mitochondrial (723 aa).

S57 carries the post-translational modification Phosphoserine. The TGS domain occupies 64–126; sequence RTIKISLPEG…ETDCHLRFLT (63 aa).

This sequence belongs to the class-II aminoacyl-tRNA synthetase family. As to quaternary structure, homodimer.

The protein resides in the mitochondrion matrix. The enzyme catalyses tRNA(Thr) + L-threonine + ATP = L-threonyl-tRNA(Thr) + AMP + diphosphate + H(+). Functionally, catalyzes the attachment of threonine to tRNA(Thr) in a two-step reaction: threonine is first activated by ATP to form Thr-AMP and then transferred to the acceptor end of tRNA(Thr). Also edits incorrectly charged tRNA(Thr) via its editing domain. This Rattus norvegicus (Rat) protein is Threonine--tRNA ligase, mitochondrial (Tars2).